Here is a 151-residue protein sequence, read N- to C-terminus: Large ribosomal subunit protein uL13 (151 aa).

The tract at residues 129 to 151 (SNHPHQAQKPETLTINTIPGGNN) is disordered.

Belongs to the universal ribosomal protein uL13 family. As to quaternary structure, part of the 50S ribosomal subunit.

Its function is as follows. This protein is one of the early assembly proteins of the 50S ribosomal subunit, although it is not seen to bind rRNA by itself. It is important during the early stages of 50S assembly. This is Large ribosomal subunit protein uL13 from Gloeothece citriformis (strain PCC 7424) (Cyanothece sp. (strain PCC 7424)).